The chain runs to 694 residues: Putative bifunctional polynucleotide kinase/RNA ligase (694 aa).

The tract at residues Met1–Ala385 is ligase domain. Positions Lys394–Phe694 are bifunctional 5'-OH polynucleotide kinase/polynucleotide 3'-phosphatase. Gly401–Ser408 contributes to the ATP binding site.

The catalysed reaction is a 5'-end dephospho-2'-deoxyribonucleoside-DNA + ATP = a 5'-end 5'-phospho-2'-deoxyribonucleoside-DNA + ADP + H(+). The enzyme catalyses ATP + (ribonucleotide)n-3'-hydroxyl + 5'-phospho-(ribonucleotide)m = (ribonucleotide)n+m + AMP + diphosphate.. In terms of biological role, trifunctional enzyme that possesses a bifunctional polynucleotide kinase/phosphatase activity and an ATP-dependent RNA ligase activity. May therefore play a role to evade an RNA damage-based host response. This is Putative bifunctional polynucleotide kinase/RNA ligase (PNK/PNL) from Autographa californica nuclear polyhedrosis virus (AcMNPV).